The chain runs to 636 residues: Threonine--tRNA ligase (636 aa).

Residues 1 to 61 (MINITLPDDS…RNDCAVRLIT (61 aa)) enclose the TGS domain. Residues 238–528 (DHRKIGTRMG…LVEHFAGKFP (291 aa)) are catalytic. Zn(2+) is bound by residues Cys329, His380, and His505.

This sequence belongs to the class-II aminoacyl-tRNA synthetase family. As to quaternary structure, homodimer. It depends on Zn(2+) as a cofactor.

The protein resides in the cytoplasm. It catalyses the reaction tRNA(Thr) + L-threonine + ATP = L-threonyl-tRNA(Thr) + AMP + diphosphate + H(+). In terms of biological role, catalyzes the attachment of threonine to tRNA(Thr) in a two-step reaction: L-threonine is first activated by ATP to form Thr-AMP and then transferred to the acceptor end of tRNA(Thr). Also edits incorrectly charged L-seryl-tRNA(Thr). The sequence is that of Threonine--tRNA ligase from Desulforapulum autotrophicum (strain ATCC 43914 / DSM 3382 / VKM B-1955 / HRM2) (Desulfobacterium autotrophicum).